A 356-amino-acid chain; its full sequence is MSKESIYGLTMAQLTDWLMERGHKKFRATQVWDWLYRKRVTTFAEMTNVNKDCLQLLEDHFAIETMSEHVRQESKDGTIKFLFRLQDGNLIETVLMRHKYGFSVCVTTQVGCNIGCSFCASGLLTKNRDLSSGEIVEQIMKVQFHLDQVGKEERVSHVVVMGIGEPFDNFQNTVDFLEIIKDHKGLAIGARHITVSTSGLAHKIYEFADLKLQVNLAVSLHAPNNELRSRIMKINKAFPIEKLMDSINYYIEKTNRRVTYEYILIKDVNDHKEEALQLAELIGDKRHLSYVNLIPYNPVDEHSQYQRSEPEAISQFFDTLKKKGINCGVRLEHGTDIDAACGQLRSKQEKKKVKVN.

The Proton acceptor role is filled by Glu92. A Radical SAM core domain is found at 98 to 336; sequence HKYGFSVCVT…CGVRLEHGTD (239 aa). Residues Cys105 and Cys341 are joined by a disulfide bond. 3 residues coordinate [4Fe-4S] cluster: Cys112, Cys116, and Cys119. S-adenosyl-L-methionine contacts are provided by residues 164–165, Ser196, 219–221, and Asn297; these read GE and SLH. Catalysis depends on Cys341, which acts as the S-methylcysteine intermediate.

The protein belongs to the radical SAM superfamily. RlmN family. The cofactor is [4Fe-4S] cluster.

It localises to the cytoplasm. It carries out the reaction adenosine(2503) in 23S rRNA + 2 reduced [2Fe-2S]-[ferredoxin] + 2 S-adenosyl-L-methionine = 2-methyladenosine(2503) in 23S rRNA + 5'-deoxyadenosine + L-methionine + 2 oxidized [2Fe-2S]-[ferredoxin] + S-adenosyl-L-homocysteine. The catalysed reaction is adenosine(37) in tRNA + 2 reduced [2Fe-2S]-[ferredoxin] + 2 S-adenosyl-L-methionine = 2-methyladenosine(37) in tRNA + 5'-deoxyadenosine + L-methionine + 2 oxidized [2Fe-2S]-[ferredoxin] + S-adenosyl-L-homocysteine. In terms of biological role, specifically methylates position 2 of adenine 2503 in 23S rRNA and position 2 of adenine 37 in tRNAs. The sequence is that of Probable dual-specificity RNA methyltransferase RlmN from Shouchella clausii (strain KSM-K16) (Alkalihalobacillus clausii).